The sequence spans 123 residues: Large ribosomal subunit protein bL12 (123 aa).

Position 84 is an N6-methyllysine (Lys84). A disordered region spans residues Pro94–Lys123. Positions Gly100 to Glu115 are enriched in basic and acidic residues.

Belongs to the bacterial ribosomal protein bL12 family. As to quaternary structure, homodimer. Part of the ribosomal stalk of the 50S ribosomal subunit. Forms a multimeric L10(L12)X complex, where L10 forms an elongated spine to which 2 to 4 L12 dimers bind in a sequential fashion. Binds GTP-bound translation factors.

In terms of biological role, seems to be the binding site for several of the factors involved in protein synthesis and appears to be essential for accurate translation. Its function is as follows. Forms part of the ribosomal stalk which helps the ribosome interact with GTP-bound translation factors. Is thus essential for accurate translation. The protein is Large ribosomal subunit protein bL12 of Halophilic eubacterium NRCC 41227.